We begin with the raw amino-acid sequence, 61 residues long: Conotoxin Vn5.3 (61 aa).

The N-terminal stretch at 1-19 (MRCLPVFVILLLLIASAPG) is a signal peptide. Positions 20–50 (VDVQPKTKYYVPRASRRDFAKKTPKRLSKLR) are excised as a propeptide.

The protein belongs to the conotoxin T superfamily. Post-translationally, contains 2 disulfide bonds that can be either 'C1-C3, C2-C4' or 'C1-C4, C2-C3', since these disulfide connectivities have been observed for conotoxins with cysteine framework V (for examples, see AC P0DQQ7 and AC P81755). Expressed by the venom duct.

The protein resides in the secreted. This chain is Conotoxin Vn5.3, found in Conus ventricosus (Mediterranean cone).